An 876-amino-acid polypeptide reads, in one-letter code: Alanine--tRNA ligase (876 aa).

4 residues coordinate Zn(2+): histidine 565, histidine 569, cysteine 667, and histidine 671.

Belongs to the class-II aminoacyl-tRNA synthetase family. Requires Zn(2+) as cofactor.

Its subcellular location is the cytoplasm. It catalyses the reaction tRNA(Ala) + L-alanine + ATP = L-alanyl-tRNA(Ala) + AMP + diphosphate. Catalyzes the attachment of alanine to tRNA(Ala) in a two-step reaction: alanine is first activated by ATP to form Ala-AMP and then transferred to the acceptor end of tRNA(Ala). Also edits incorrectly charged Ser-tRNA(Ala) and Gly-tRNA(Ala) via its editing domain. This is Alanine--tRNA ligase from Staphylococcus aureus (strain bovine RF122 / ET3-1).